The following is a 712-amino-acid chain: Polyribonucleotide nucleotidyltransferase (712 aa).

Mg(2+) contacts are provided by Asp487 and Asp493. The 60-residue stretch at 554–613 (PKIITMTINPDKIRDVIGPSGKQINKIIEETGVKIDIEQDGTVFISSINQEMNDKAKKII) folds into the KH domain. Positions 623-691 (GEIYEGKVKR…KQGRVNLSRK (69 aa)) constitute an S1 motif domain.

This sequence belongs to the polyribonucleotide nucleotidyltransferase family. The cofactor is Mg(2+).

The protein resides in the cytoplasm. The enzyme catalyses RNA(n+1) + phosphate = RNA(n) + a ribonucleoside 5'-diphosphate. Its function is as follows. Involved in mRNA degradation. Catalyzes the phosphorolysis of single-stranded polyribonucleotides processively in the 3'- to 5'-direction. The chain is Polyribonucleotide nucleotidyltransferase from Bacillus cereus (strain AH820).